The primary structure comprises 304 residues: uncharacterized protein (304 aa).

Positions 1-15 (MTRPRPPLGPAMAGA) are cleaved as a signal peptide. The region spanning 28 to 151 (NAAASTDADR…LSRWVDSLLS (124 aa)) is the Thioredoxin domain.

This is an uncharacterized protein from Mycobacterium bovis (strain ATCC BAA-935 / AF2122/97).